Here is a 473-residue protein sequence, read N- to C-terminus: H(+)/Cl(-) exchange transporter ClcA (473 aa).

Residues 1–32 (MNTDTPTFEAQQVVRLRRGDLIRRLLQRDKTP) lie on the Cytoplasmic side of the membrane. The helical transmembrane segment at 33 to 69 (LAILLTAAVVGTVTGLIGVAFEKAVTWVQNLRIGALV) threads the bilayer. At 70 to 76 (QTADYAI) the chain is on the periplasmic side. Residues 77 to 100 (LVWPLAFILSALLAMVGYFLVRKF) form a helical membrane-spanning segment. Topologically, residues 101 to 108 (APEAGGSG) are cytoplasmic. A Selectivity filter part_1 motif is present at residues 106 to 110 (GSGIP). S107 provides a ligand contact to chloride. The segment at residues 109–116 (IPEIEGAL) is an intramembrane region (helical). The Cytoplasmic segment spans residues 117-123 (EELRPVR). A helical transmembrane segment spans residues 124 to 141 (WWRVLPVKFVGGMGTLGA). Residues 142–147 (GMVLGR) lie on the Periplasmic side of the membrane. The Selectivity filter part_2 motif lies at 146–150 (GREGP). A helical membrane pass occupies residues 148–166 (EGPTVQIGGNIGRMVLDLF). Residues 167–176 (RMRSAEARHT) are Cytoplasmic-facing. 2 intramembrane regions (helical) span residues 177 to 189 (LLAT…LSAA) and 193 to 201 (PLAGILFII). The Cytoplasmic portion of the chain corresponds to 202-214 (EEMRPQFRYNLIS). A helical membrane pass occupies residues 215-232 (IKAVFTGVIMSSIVFRIF). Residues 233–252 (NGEAPIIEVGKLSNAPVNTL) are Periplasmic-facing. A helical membrane pass occupies residues 253-281 (WLYLILGMIFGCVGPLFNHLVLRTQDMFQ). Topologically, residues 282 to 287 (RFHGGE) are cytoplasmic. Residues 288–309 (IKKWVLMGGAIGGLCGILGLIE) form a helical membrane-spanning segment. Topologically, residues 310 to 329 (PEAAGGGFNLIPIAAAGNYS) are periplasmic. A helical transmembrane segment spans residues 330-349 (VGLLLFIFIARVLTTLLCFS). The Cytoplasmic segment spans residues 350–354 (SGAPG). Positions 355–359 (GIFAP) match the Selectivity filter part_3 motif. Residues 355-376 (GIFAPMLALGTLLGTAFGMAAA) form a helical membrane-spanning segment. Residues I356 and F357 each contribute to the chloride site. Topologically, residues 377–386 (ACFPQYHLEA) are periplasmic. An intramembrane region (helical) is located at residues 387-401 (GTFAIAGMGALLAAS). The segment at residues 402–404 (VRA) is an intramembrane region (note=Loop between two helices). An intramembrane region (helical) is located at residues 405–416 (PLTGIVLVLEMT). The note=Loop between two helices intramembrane region spans 417–421 (DNYQL). Residues 422–438 (ILPMIITCLGATLLAQF) form a helical membrane-spanning segment. Topologically, residues 439-473 (MGGKPLYSTILARTLAKQDAEQAAKSQRSVAGENT) are cytoplasmic. Y445 is a chloride binding site.

The protein belongs to the chloride channel (TC 2.A.49) family. ClcA subfamily. Homodimer.

It localises to the cell inner membrane. The catalysed reaction is 2 chloride(in) + H(+)(out) = 2 chloride(out) + H(+)(in). Proton-coupled chloride transporter. Functions as antiport system and exchanges two chloride ions for 1 proton. Probably acts as an electrical shunt for an outwardly-directed proton pump that is linked to amino acid decarboxylation, as part of the extreme acid resistance (XAR) response. This is H(+)/Cl(-) exchange transporter ClcA from Citrobacter koseri (strain ATCC BAA-895 / CDC 4225-83 / SGSC4696).